The primary structure comprises 365 residues: Caffeic acid 3-O-methyltransferase (365 aa).

130 to 136 (MNQDKVL) lines the substrate pocket. A substrate binding region spans residues 162 to 180 (AFDYHGTDPRFNKVFNKGM). S-adenosyl-L-methionine contacts are provided by Gly208, Asp231, Asp251, Met252, and Lys265. The active-site Proton acceptor is His269.

Belongs to the class I-like SAM-binding methyltransferase superfamily. Cation-independent O-methyltransferase family. COMT subfamily. In terms of assembly, homodimer.

It catalyses the reaction (E)-caffeate + S-adenosyl-L-methionine = (E)-ferulate + S-adenosyl-L-homocysteine + H(+). The protein operates within aromatic compound metabolism; phenylpropanoid biosynthesis. Functionally, catalyzes the conversion of caffeic acid to ferulic acid and of 5-hydroxyferulic acid to sinapic acid. The resulting products may subsequently be converted to the corresponding alcohols that are incorporated into lignins. The polypeptide is Caffeic acid 3-O-methyltransferase (COMT1) (Rosa chinensis (China rose)).